An 83-amino-acid polypeptide reads, in one-letter code: MTIFNSISSISNPTRTALSSINTYNYNGSSVNDNSTAYFDNDFGGWGGLGNFCNGNGCGGGSSNVNVINLDIDIGSRRHRRCC.

The protein belongs to the UPF0512 family.

This Dictyostelium discoideum (Social amoeba) protein is UPF0512 protein W.